The primary structure comprises 417 residues: UDP-N-acetylglucosamine 1-carboxyvinyltransferase (417 aa).

A phosphoenolpyruvate-binding site is contributed by 22–23; the sequence is KN. Arg91 contacts UDP-N-acetyl-alpha-D-glucosamine. The active-site Proton donor is Cys115. Residue Cys115 is modified to 2-(S-cysteinyl)pyruvic acid O-phosphothioketal. Residues 120 to 124, Asp304, and Ile326 contribute to the UDP-N-acetyl-alpha-D-glucosamine site; that span reads RPVDL.

This sequence belongs to the EPSP synthase family. MurA subfamily.

The protein localises to the cytoplasm. It catalyses the reaction phosphoenolpyruvate + UDP-N-acetyl-alpha-D-glucosamine = UDP-N-acetyl-3-O-(1-carboxyvinyl)-alpha-D-glucosamine + phosphate. Its pathway is cell wall biogenesis; peptidoglycan biosynthesis. Its function is as follows. Cell wall formation. Adds enolpyruvyl to UDP-N-acetylglucosamine. This chain is UDP-N-acetylglucosamine 1-carboxyvinyltransferase, found in Nitratidesulfovibrio vulgaris (strain ATCC 29579 / DSM 644 / CCUG 34227 / NCIMB 8303 / VKM B-1760 / Hildenborough) (Desulfovibrio vulgaris).